We begin with the raw amino-acid sequence, 341 residues long: Ribonucleoside-diphosphate reductase subunit beta (341 aa).

Residues Asp-89, Glu-120, and His-123 each coordinate Fe cation. Tyr-127 is an active-site residue. The Fe cation site is built by Glu-185, Glu-219, and His-222.

The protein belongs to the ribonucleoside diphosphate reductase small chain family. In terms of assembly, tetramer of two alpha and two beta subunits. Fe cation is required as a cofactor.

It carries out the reaction a 2'-deoxyribonucleoside 5'-diphosphate + [thioredoxin]-disulfide + H2O = a ribonucleoside 5'-diphosphate + [thioredoxin]-dithiol. Its function is as follows. Provides the precursors necessary for DNA synthesis. Catalyzes the biosynthesis of deoxyribonucleotides from the corresponding ribonucleotides. The protein is Ribonucleoside-diphosphate reductase subunit beta (nrdB) of Helicobacter pylori (strain J99 / ATCC 700824) (Campylobacter pylori J99).